Here is a 202-residue protein sequence, read N- to C-terminus: Small ribosomal subunit protein uS4c (202 aa).

An S4 RNA-binding domain is found at 90–158 (MRSDNVIFRL…ISKNIELYQK (69 aa)).

This sequence belongs to the universal ribosomal protein uS4 family. As to quaternary structure, part of the 30S ribosomal subunit. Contacts protein S5. The interaction surface between S4 and S5 is involved in control of translational fidelity.

Its subcellular location is the plastid. It is found in the chloroplast. One of the primary rRNA binding proteins, it binds directly to 16S rRNA where it nucleates assembly of the body of the 30S subunit. Its function is as follows. With S5 and S12 plays an important role in translational accuracy. This Anthoceros punctatus (Hornwort) protein is Small ribosomal subunit protein uS4c (rps4).